A 264-amino-acid polypeptide reads, in one-letter code: Tropomyosin Cha f 1.0101 (264 aa).

Residue methionine 1 is modified to N-acetylmethionine. 2 disordered regions span residues 1–56 (MDAI…VENE) and 92–126 (IQLP…SERM). A coiled-coil region spans residues 1–264 (MDAIKKKMQA…RLEDELVNEK (264 aa)). Over residues 12 to 45 (KLEKDNAMDRADTLEQQNKEANLRAEKTEEEIRA) the composition is skewed to basic and acidic residues.

Belongs to the tropomyosin family. As to quaternary structure, homodimer. As to expression, expressed in muscle (at protein level). Expressed in claw muscles.

Functionally, tropomyosin, in association with the troponin complex, plays a central role in the calcium dependent regulation of muscle contraction. The sequence is that of Tropomyosin Cha f 1.0101 from Charybdis feriata (Crucifix crab).